The following is a 422-amino-acid chain: G-protein coupled receptor 83 (422 aa).

The first 17 residues, 1–17 (MNVPPVLLLFLLSSVRA), serve as a signal peptide directing secretion. Over 18–70 (TEQPQVVTEHPSMDAALTGANASHFWANYTFSDWQNFVGRRRYGAESQNPTVK) the chain is Extracellular. Residues 71–91 (ALLIVAYSFIIVFSLFGNVLV) form a helical membrane-spanning segment. Residues 92–106 (CHVIFKNQRMHSATS) are Cytoplasmic-facing. Residues 107-127 (LFIVNLAVADIMITLLNTPFT) traverse the membrane as a helical segment. The Extracellular portion of the chain corresponds to 128–143 (LVRFVNSTWVFGKGMC). Cys143 and Cys223 are joined by a disulfide. A helical transmembrane segment spans residues 144-166 (HVSRFAQYCSLHVSALTLTAIAV). Topologically, residues 167–184 (DRHQVIMHPLKPRISITK) are cytoplasmic. Residues 185–205 (GVIYIAVIWVMATFFSLPHAI) form a helical membrane-spanning segment. Residues 206–236 (CQKLFTFKYSEDIVRSLCLPDFPEPADLFWK) lie on the Extracellular side of the membrane. Residues 237–257 (YLDLATFILLYLLPLFIISVA) form a helical membrane-spanning segment. The Cytoplasmic segment spans residues 258–292 (YARVAKKLWLCNTIGDVTTEQYLALRRKKKTTVKM). Residues 293–313 (LVLVVVLFALCWFPLNCYVLL) form a helical membrane-spanning segment. Topologically, residues 314-326 (LSSKAIHTNNALY) are extracellular. Residues 327–347 (FAFHWFAMSSTCYNPFIYCWL) form a helical membrane-spanning segment. Over 348 to 422 (NENFRVELKA…SSVEPTVAVS (75 aa)) the chain is Cytoplasmic. The disordered stretch occupies residues 401-422 (PSSQIQSGKTDLSSVEPTVAVS).

Belongs to the G-protein coupled receptor 1 family. As to expression, expressed preferentially in brain, and its neuronal expression is relegated to limbic brain regions, particularly in forebrain.

The protein localises to the cell membrane. G-protein coupled receptor for PEN, a neuropeptide produced from the precursor protein, proSAAS (encoded by PCSK1N). Acts through a G(i)- and G(q)-alpha-alpha-mediated pathway in response to PEN. Plays a role in food intake and body weight regulation. May contribute to the regulation of anxiety-related behaviors. This Rattus norvegicus (Rat) protein is G-protein coupled receptor 83.